The chain runs to 156 residues: LIM domain only protein 3 (156 aa).

LIM zinc-binding domains lie at 22-84 (KGCA…LFGV) and 86-148 (GNCA…GLMK).

The chain is LIM domain only protein 3 from Xenopus laevis (African clawed frog).